The primary structure comprises 223 residues: Voltage-dependent calcium channel gamma-1 subunit (223 aa).

The Cytoplasmic portion of the chain corresponds to 1–10 (MSQTKTLKVR). The helical transmembrane segment at 11-29 (VALLCILVGIVLALVAVVT) threads the bilayer. Residues 30–109 (DHWAVLSPHV…TQKEYSISAA (80 aa)) are Extracellular-facing. 2 N-linked (GlcNAc...) asparagine glycosylation sites follow: Asn-43 and Asn-80. Cys-57 and Cys-81 are oxidised to a cystine. Residues 110–130 (AIAIFSLGFIIVGTLCALLSF) traverse the membrane as a helical segment. The Cytoplasmic portion of the chain corresponds to 131–135 (RKKRD). The helical transmembrane segment at 136 to 156 (YLLRPASMFYIFAGLCLSVSA) threads the bilayer. Residues 157–180 (EVMRQSVQRMVDSEHTAWIAHSLA) lie on the Extracellular side of the membrane. A helical membrane pass occupies residues 181–205 (WSFICACVAAALLLVGGLALLLLAL). Residues 206–223 (PRMPRDPWESCMDAEPEH) are Cytoplasmic-facing.

Belongs to the PMP-22/EMP/MP20 family. CACNG subfamily. In terms of assembly, component of a calcium channel complex consisting of a pore-forming alpha subunit (CACNA1S) and the ancillary subunits CACNB1 or CACNB2, CACNG1 and CACNA2D1. The channel complex contains alpha, beta, gamma and delta subunits in a 1:1:1:1 ratio, i.e. it contains either CACNB1 or CACNB2. In terms of processing, N-glycosylated.

The protein resides in the cell membrane. The protein localises to the sarcolemma. Regulatory subunit of the voltage-gated calcium channel that gives rise to L-type calcium currents in skeletal muscle. Regulates channel inactivation kinetics. The polypeptide is Voltage-dependent calcium channel gamma-1 subunit (CACNG1) (Bos taurus (Bovine)).